The primary structure comprises 589 residues: MMRSHYCGTLNRSHVGQAVTLSGWVHRIRNLGRFIFMQIRDREGIVQVFFDEKDDTLFKVASQLRAEACVQIQGQVIARDEAQINPEMATGEIEVLVQNVLVYNNAEVLPLDFNQNNTEEQRLKYRYLDLRRHKMAENLKTRAKITSFVRRYMDEHGFLDIETPMLTKATPEGARDYLVPSRVHKGKFYALPQSPQLFKQLLMMSGFDRYYQIVKCFRDEDLRADRQPEFTQIDVETSFLTAEEVRALMENMIHSLWLDRLNVDLGKFPIMSWQEAMQHFGSDKPDLRNPLELVDIADIVKNVEFNVFNEPANAIDGRVTVLRVPNGATLTRKQIDEYTQFVAIYGAKGLAWAKINDINAGMDGIQSPVAKFLNAEIFNALIERTAAQNGDILFFGADKWQVVTDAMGALRLKIGRDLALTDQTAWKPLWVIDFPMFERDGEGNLSAMHHPFTAPKDLSPDQLAADPIKAVANAYDMVINGYEVGGGSVRIFDPKMQQTVFNILGINEQDQQEKFGFLLDALKFGTPPHAGLAFGLDRLTMLITGTENIRDVIAFPKTTAAACLMTEAPSYANPQVLQELAIQTTVETE.

Glutamate 172 is an L-aspartate binding site. The interval 196–199 (QLFK) is aspartate. Arginine 218 is a binding site for L-aspartate. Residues 218-220 (RDE) and glutamine 227 each bind ATP. Histidine 449 serves as a coordination point for L-aspartate. Glutamate 483 is a binding site for ATP. Residue arginine 490 participates in L-aspartate binding. Residue 535-538 (GLDR) coordinates ATP.

The protein belongs to the class-II aminoacyl-tRNA synthetase family. Type 1 subfamily. As to quaternary structure, homodimer.

It is found in the cytoplasm. The enzyme catalyses tRNA(Asp) + L-aspartate + ATP = L-aspartyl-tRNA(Asp) + AMP + diphosphate. Its function is as follows. Catalyzes the attachment of L-aspartate to tRNA(Asp) in a two-step reaction: L-aspartate is first activated by ATP to form Asp-AMP and then transferred to the acceptor end of tRNA(Asp). The sequence is that of Aspartate--tRNA ligase from Haemophilus ducreyi (strain 35000HP / ATCC 700724).